The sequence spans 60 residues: Hemocyte defensin Cg-Defh2 (60 aa).

The signal sequence occupies residues L1–A17. Positions 19, 20, and 21 each coordinate beta-D-GlcNAc-(1-&gt;4)-Mur2Ac(oyl-L-Ala-gamma-D-Glu-L-Lys-D-Ala-D-Ala)-di-trans,octa-cis-undecaprenyl diphosphate. Cystine bridges form between C21-C42, C28-C51, C32-C53, and C37-C56. A binds to membrane interface region spans residues P22–Q25. H31 is a beta-D-GlcNAc-(1-&gt;4)-Mur2Ac(oyl-L-Ala-gamma-D-Glu-L-Lys-D-Ala-D-Ala)-di-trans,octa-cis-undecaprenyl diphosphate binding site. A binds to membrane interface region spans residues D43–L49. C51 lines the beta-D-GlcNAc-(1-&gt;4)-Mur2Ac(oyl-L-Ala-gamma-D-Glu-L-Lys-D-Ala-D-Ala)-di-trans,octa-cis-undecaprenyl diphosphate pocket.

Belongs to the invertebrate defensin family. In terms of tissue distribution, expressed in hemocytes.

Its subcellular location is the secreted. It localises to the target cell membrane. Its function is as follows. Antibacterial peptide mostly active against Gram-positive bacteria. It acts by selectively inhibiting peptidoglycan biosynthesis through complex formation with the cell wall precursor lipid II (1:1 molar ratio) thus inhibiting cell wall synthesis. It does not disrupt cell membranes. Is noticeably more potent than Cg-Defh1. This chain is Hemocyte defensin Cg-Defh2, found in Magallana gigas (Pacific oyster).